The primary structure comprises 213 residues: Phosphatidylcholine transfer protein (213 aa).

Met1 carries the N-acetylmethionine modification. The START domain maps to 1-212; it reads MDPGAGAFSE…MVKACQNYKK (212 aa). A 1,2-diacyl-sn-glycero-3-phosphocholine-binding residues include Tyr72 and Arg78. Phosphoserine is present on Ser139. An a 1,2-diacyl-sn-glycero-3-phosphocholine-binding site is contributed by Gln157. The tract at residues 171-176 is part of the binding site for phosphatidylcholine; the sequence is VFMYYF.

As to quaternary structure, interacts with ACOT13/THEM2.

The protein resides in the cytoplasm. Catalyzes the transfer of phosphatidylcholine between membranes. Binds phosphatidylcholine in a tight 1:1 stoichiometric complex. The polypeptide is Phosphatidylcholine transfer protein (PCTP) (Bos taurus (Bovine)).